Consider the following 332-residue polypeptide: Endo-1,4-beta-xylanase (332 aa).

An N-terminal signal peptide occupies residues M1 to A21. A GH10 domain is found at K26–A316. The Proton donor role is filled by E120. The cysteines at positions 128 and 160 are disulfide-linked. The Nucleophile role is filled by E214. C247 and C253 form a disulfide bridge.

Belongs to the glycosyl hydrolase 10 (cellulase F) family.

It is found in the secreted. The enzyme catalyses Endohydrolysis of (1-&gt;4)-beta-D-xylosidic linkages in xylans.. Requires at least three xylose residues for catalytic activity. Does not have activity against xylobiose. The chain is Endo-1,4-beta-xylanase from Naganishia albida (Cryptococcus albidus).